A 221-amino-acid polypeptide reads, in one-letter code: Germin-like protein subfamily 1 member 17 (221 aa).

Positions M1 to A21 are cleaved as a signal peptide. An intrachain disulfide couples C31 to C48. One can recognise a Cupin type-1 domain in the interval S76–K213. N77 is a glycosylation site (N-linked (GlcNAc...) asparagine). Mn(2+) contacts are provided by H110, H112, E117, and H159.

Belongs to the germin family. As to quaternary structure, oligomer (believed to be a pentamer but probably hexamer).

It is found in the secreted. The protein resides in the extracellular space. The protein localises to the apoplast. Its function is as follows. May play a role in plant defense. Probably has no oxalate oxidase activity even if the active site is conserved. This chain is Germin-like protein subfamily 1 member 17, found in Arabidopsis thaliana (Mouse-ear cress).